The chain runs to 148 residues: Deoxyuridine 5'-triphosphate nucleotidohydrolase (148 aa).

Residues 68-70 (RSG), N81, 85-87 (TID), and K95 each bind substrate.

Belongs to the dUTPase family. The cofactor is Mg(2+).

The enzyme catalyses dUTP + H2O = dUMP + diphosphate + H(+). It participates in pyrimidine metabolism; dUMP biosynthesis; dUMP from dCTP (dUTP route): step 2/2. This enzyme is involved in nucleotide metabolism: it produces dUMP, the immediate precursor of thymidine nucleotides and it decreases the intracellular concentration of dUTP so that uracil cannot be incorporated into DNA. This Rickettsia rickettsii (strain Iowa) protein is Deoxyuridine 5'-triphosphate nucleotidohydrolase.